We begin with the raw amino-acid sequence, 79 residues long: Putative membrane protein insertion efficiency factor (79 aa).

This sequence belongs to the UPF0161 family.

Its subcellular location is the cell inner membrane. Its function is as follows. Could be involved in insertion of integral membrane proteins into the membrane. This is Putative membrane protein insertion efficiency factor from Prochlorococcus marinus (strain NATL1A).